The primary structure comprises 142 residues: Large ribosomal subunit protein uL11 (142 aa).

The protein belongs to the universal ribosomal protein uL11 family. As to quaternary structure, part of the ribosomal stalk of the 50S ribosomal subunit. Interacts with L10 and the large rRNA to form the base of the stalk. L10 forms an elongated spine to which L12 dimers bind in a sequential fashion forming a multimeric L10(L12)X complex. Post-translationally, one or more lysine residues are methylated.

Its function is as follows. Forms part of the ribosomal stalk which helps the ribosome interact with GTP-bound translation factors. This is Large ribosomal subunit protein uL11 from Buchnera aphidicola subsp. Acyrthosiphon pisum (strain APS) (Acyrthosiphon pisum symbiotic bacterium).